The following is an 877-amino-acid chain: Phosphoenolpyruvate carboxylase (877 aa).

Catalysis depends on residues His137 and Lys544.

The protein belongs to the PEPCase type 1 family. The cofactor is Mg(2+).

The catalysed reaction is oxaloacetate + phosphate = phosphoenolpyruvate + hydrogencarbonate. Functionally, forms oxaloacetate, a four-carbon dicarboxylic acid source for the tricarboxylic acid cycle. The protein is Phosphoenolpyruvate carboxylase of Edwardsiella ictaluri (strain 93-146).